A 507-amino-acid chain; its full sequence is RNA-splicing ligase RtcB homolog (507 aa).

The Mn(2+) site is built by aspartate 121, cysteine 124, histidine 229, histidine 261, and histidine 355. A GMP-binding site is contributed by 228–232 (NHYGE). Residues 355–356 (HN), 404–407 (GGTM), serine 411, 430–433 (HGSG), and lysine 506 each bind GMP. Histidine 430 functions as the GMP-histidine intermediate in the catalytic mechanism.

This sequence belongs to the RtcB family. As to quaternary structure, catalytic component of the tRNA-splicing ligase complex. Mn(2+) serves as cofactor.

It carries out the reaction a 3'-end 3'-phospho-ribonucleotide-RNA + a 5'-end dephospho-ribonucleoside-RNA + GTP = a ribonucleotidyl-ribonucleotide-RNA + GMP + diphosphate. It catalyses the reaction a 3'-end 2',3'-cyclophospho-ribonucleotide-RNA + a 5'-end dephospho-ribonucleoside-RNA + GTP + H2O = a ribonucleotidyl-ribonucleotide-RNA + GMP + diphosphate + H(+). In terms of biological role, catalytic subunit of the tRNA-splicing ligase complex that acts by directly joining spliced tRNA halves to mature-sized tRNAs by incorporating the precursor-derived splice junction phosphate into the mature tRNA as a canonical 3',5'-phosphodiester. May act as an RNA ligase with broad substrate specificity, and may function toward other RNAs. This Theileria parva (East coast fever infection agent) protein is RNA-splicing ligase RtcB homolog.